Here is a 335-residue protein sequence, read N- to C-terminus: Ketol-acid reductoisomerase (NADP(+)) (335 aa).

One can recognise a KARI N-terminal Rossmann domain in the interval Met-1–Thr-182. NADP(+) is bound by residues Tyr-25–Gln-28, Arg-48, Ser-51, Ser-53, and Asp-83–Gln-86. Residue His-108 is part of the active site. Gly-134 contributes to the NADP(+) binding site. Residues Thr-183–Leu-328 enclose the KARI C-terminal knotted domain. Residues Asp-191, Glu-195, Glu-227, and Glu-231 each coordinate Mg(2+). Ser-252 provides a ligand contact to substrate.

The protein belongs to the ketol-acid reductoisomerase family. Mg(2+) is required as a cofactor.

It carries out the reaction (2R)-2,3-dihydroxy-3-methylbutanoate + NADP(+) = (2S)-2-acetolactate + NADPH + H(+). The enzyme catalyses (2R,3R)-2,3-dihydroxy-3-methylpentanoate + NADP(+) = (S)-2-ethyl-2-hydroxy-3-oxobutanoate + NADPH + H(+). The protein operates within amino-acid biosynthesis; L-isoleucine biosynthesis; L-isoleucine from 2-oxobutanoate: step 2/4. It participates in amino-acid biosynthesis; L-valine biosynthesis; L-valine from pyruvate: step 2/4. Functionally, involved in the biosynthesis of branched-chain amino acids (BCAA). Catalyzes an alkyl-migration followed by a ketol-acid reduction of (S)-2-acetolactate (S2AL) to yield (R)-2,3-dihydroxy-isovalerate. In the isomerase reaction, S2AL is rearranged via a Mg-dependent methyl migration to produce 3-hydroxy-3-methyl-2-ketobutyrate (HMKB). In the reductase reaction, this 2-ketoacid undergoes a metal-dependent reduction by NADPH to yield (R)-2,3-dihydroxy-isovalerate. The chain is Ketol-acid reductoisomerase (NADP(+)) from Methanosarcina acetivorans (strain ATCC 35395 / DSM 2834 / JCM 12185 / C2A).